The sequence spans 846 residues: DNA mismatch repair protein MutS (846 aa).

610-617 lines the ATP pocket; that stretch reads GPNMGGKS.

The protein belongs to the DNA mismatch repair MutS family.

This protein is involved in the repair of mismatches in DNA. It is possible that it carries out the mismatch recognition step. This protein has a weak ATPase activity. This Legionella pneumophila (strain Corby) protein is DNA mismatch repair protein MutS.